A 302-amino-acid polypeptide reads, in one-letter code: Sulfate adenylyltransferase subunit 2 (302 aa).

The protein belongs to the PAPS reductase family. CysD subfamily. In terms of assembly, heterodimer composed of CysD, the smaller subunit, and CysN.

The enzyme catalyses sulfate + ATP + H(+) = adenosine 5'-phosphosulfate + diphosphate. Its pathway is sulfur metabolism; hydrogen sulfide biosynthesis; sulfite from sulfate: step 1/3. Functionally, with CysN forms the ATP sulfurylase (ATPS) that catalyzes the adenylation of sulfate producing adenosine 5'-phosphosulfate (APS) and diphosphate, the first enzymatic step in sulfur assimilation pathway. APS synthesis involves the formation of a high-energy phosphoric-sulfuric acid anhydride bond driven by GTP hydrolysis by CysN coupled to ATP hydrolysis by CysD. In Enterobacter sp. (strain 638), this protein is Sulfate adenylyltransferase subunit 2.